Consider the following 124-residue polypeptide: Schlafen-like protein (124 aa).

This sequence belongs to the Schlafen family. Subgroup poxviridae B3 subfamily.

The polypeptide is Schlafen-like protein (Homo sapiens (Human)).